Here is a 490-residue protein sequence, read N- to C-terminus: Asparagine--tRNA ligase (490 aa).

This sequence belongs to the class-II aminoacyl-tRNA synthetase family. In terms of assembly, homodimer.

Its subcellular location is the cytoplasm. The enzyme catalyses tRNA(Asn) + L-asparagine + ATP = L-asparaginyl-tRNA(Asn) + AMP + diphosphate + H(+). This Rhodopirellula baltica (strain DSM 10527 / NCIMB 13988 / SH1) protein is Asparagine--tRNA ligase.